We begin with the raw amino-acid sequence, 430 residues long: 3-phosphoshikimate 1-carboxyvinyltransferase (430 aa).

Residues K20, S21, and R25 each contribute to the 3-phosphoshikimate site. A phosphoenolpyruvate-binding site is contributed by K20. 2 residues coordinate phosphoenolpyruvate: G90 and R118. S163, S164, Q165, S191, D311, and K338 together coordinate 3-phosphoshikimate. Q165 contributes to the phosphoenolpyruvate binding site. D311 serves as the catalytic Proton acceptor. Residues R342 and R383 each contribute to the phosphoenolpyruvate site.

Belongs to the EPSP synthase family. In terms of assembly, monomer.

The protein resides in the cytoplasm. It catalyses the reaction 3-phosphoshikimate + phosphoenolpyruvate = 5-O-(1-carboxyvinyl)-3-phosphoshikimate + phosphate. It functions in the pathway metabolic intermediate biosynthesis; chorismate biosynthesis. Functionally, catalyzes the transfer of the enolpyruvyl moiety of phosphoenolpyruvate (PEP) to the 5-hydroxyl of shikimate-3-phosphate (S3P) to produce enolpyruvyl shikimate-3-phosphate and inorganic phosphate. The protein is 3-phosphoshikimate 1-carboxyvinyltransferase of Methanosarcina mazei (strain ATCC BAA-159 / DSM 3647 / Goe1 / Go1 / JCM 11833 / OCM 88) (Methanosarcina frisia).